Consider the following 280-residue polypeptide: Vitamin B12-binding protein (280 aa).

An N-terminal signal peptide occupies residues 1 to 27 (MMPLGLFPLPRAAAVLLISLLTLPAQA). The Fe/B12 periplasmic-binding domain occupies 30 to 277 (RVISLSPSTT…QMASIPTPVA (248 aa)). Y57 is a cyanocob(III)alamin binding site. C190 and C266 are oxidised to a cystine.

Belongs to the BtuF family. As to quaternary structure, the complex is composed of two ATP-binding proteins (BtuD), two transmembrane proteins (BtuC) and a solute-binding protein (BtuF).

The protein resides in the periplasm. Its function is as follows. Part of the ABC transporter complex BtuCDF involved in vitamin B12 import. Binds vitamin B12 and delivers it to the periplasmic surface of BtuC. The protein is Vitamin B12-binding protein of Yersinia pestis bv. Antiqua (strain Antiqua).